The sequence spans 513 residues: GTPase Obg (513 aa).

The region spanning 3 to 160 (THFVDRVVVH…LDLHLEVKTL (158 aa)) is the Obg domain. Residues 161 to 337 (ADVALVGFPS…LSFAMAELVS (177 aa)) enclose the OBG-type G domain. GTP contacts are provided by residues 167-174 (GFPSAGKS), 192-196 (FTTLV), 213-216 (DVPG), 289-292 (NKAD), and 318-320 (SAV). Residues Ser174 and Thr194 each coordinate Mg(2+). Positions 355–444 (PRAVDDQGFK…ANAVVFDWEP (90 aa)) constitute an OCT domain. The disordered stretch occupies residues 457-513 (GSDLRLEDHSRPTRDEKRLQERERRAAKVTARDELEAERRAGHWTAADEADEELSQR). The segment covering 458–497 (SDLRLEDHSRPTRDEKRLQERERRAAKVTARDELEAERRA) has biased composition (basic and acidic residues). A compositionally biased stretch (acidic residues) spans 504-513 (DEADEELSQR).

The protein belongs to the TRAFAC class OBG-HflX-like GTPase superfamily. OBG GTPase family. Monomer. Mg(2+) is required as a cofactor.

The protein localises to the cytoplasm. In terms of biological role, an essential GTPase which binds GTP, GDP and possibly (p)ppGpp with moderate affinity, with high nucleotide exchange rates and a fairly low GTP hydrolysis rate. Plays a role in control of the cell cycle, stress response, ribosome biogenesis and in those bacteria that undergo differentiation, in morphogenesis control. In Kineococcus radiotolerans (strain ATCC BAA-149 / DSM 14245 / SRS30216), this protein is GTPase Obg.